The sequence spans 179 residues: Ribosome maturation factor RimM (179 aa).

The PRC barrel domain occupies 102–179 (DGEYYWYQLE…EMKVDWDADF (78 aa)).

This sequence belongs to the RimM family. Binds ribosomal protein uS19.

The protein resides in the cytoplasm. Its function is as follows. An accessory protein needed during the final step in the assembly of 30S ribosomal subunit, possibly for assembly of the head region. Essential for efficient processing of 16S rRNA. May be needed both before and after RbfA during the maturation of 16S rRNA. It has affinity for free ribosomal 30S subunits but not for 70S ribosomes. This is Ribosome maturation factor RimM from Pseudomonas syringae pv. syringae (strain B728a).